Consider the following 303-residue polypeptide: Lysosomal amino acid transporter 1 homolog (303 aa).

Topologically, residues 1 to 38 (MAEGLRAPPPPGNGSECPDGARWVLRLLGECARDGRDV) are lumenal. Asparagine 13 carries N-linked (GlcNAc...) asparagine glycosylation. The PQ-loop 1 domain occupies 36 to 102 (RDVGSALLGL…LANQLPLQVY (67 aa)). The helical transmembrane segment at 39–59 (GSALLGLLSIGCFAAAALPQF) threads the bilayer. The Cytoplasmic segment spans residues 60-73 (YQACKTGIMDRALS). Residues 74 to 94 (IYFLLGWLGGDLLNLIGSFLA) form a helical membrane-spanning segment. The Lumenal segment spans residues 95-96 (NQ). The helical transmembrane segment at 97–117 (LPLQVYTAVYYVLADLVMLSL) threads the bilayer. Residues 118 to 131 (YGYYKAKNWGTGAT) are Cytoplasmic-facing. A helical transmembrane segment spans residues 132–152 (ASINAACLFCLLGTATTLTVL). Residues 153-182 (SHDTGPAPNPAAFGGRSLLSLGLEGPGPEP) are Lumenal-facing. Residues 183–203 (ISKTEIIGFAIGSISSVLYLC) traverse the membrane as a helical segment. A PQ-loop 2 domain is found at 186-251 (TEIIGFAIGS…LKNPEPGQSE (66 aa)). Residues 204–220 (SRLPQIYTNYRRKSTAG) lie on the Cytoplasmic side of the membrane. A helical transmembrane segment spans residues 221 to 241 (VSFLLFALVMLGNLLYGTSVL). Residues 242 to 260 (LKNPEPGQSEGDYILHHLP) lie on the Lumenal side of the membrane. A helical transmembrane segment spans residues 261–281 (WLIGSLGVLSLDVIISFQFLA). The Cytoplasmic portion of the chain corresponds to 282 to 303 (YRTGQPSAGEEREALLAEHGDS). Residues 296–297 (LL) carry the Di-leucine motif motif.

The protein belongs to the laat-1 family.

It localises to the lysosome membrane. Its function is as follows. Amino acid transporter that specifically mediates the pH-dependent export of the cationic amino acids arginine, histidine and lysine from lysosomes. The chain is Lysosomal amino acid transporter 1 homolog (SLC66A1) from Gallus gallus (Chicken).